The sequence spans 121 residues: Type II secretion system protein I (121 aa).

Residues 1-6 constitute a propeptide, leader sequence; sequence MKKQSG. N-methylmethionine is present on methionine 7. Residues 7 to 27 traverse the membrane as a helical segment; that stretch reads MTLIEVMVALVVFALAGLAVM.

It belongs to the GSP I family. Type II secretion is composed of four main components: the outer membrane complex, the inner membrane complex, the cytoplasmic secretion ATPase and the periplasm-spanning pseudopilus. Interacts with core component PulG. In terms of processing, cleaved by prepilin peptidase. Post-translationally, methylated by prepilin peptidase at the amino group of the N-terminal methionine once the leader sequence is cleaved by prepilin peptidase.

The protein localises to the cell inner membrane. Its function is as follows. Component of the type II secretion system required for the energy-dependent secretion of extracellular factors such as proteases and toxins from the periplasm. Part of the pseudopilus tip complex that is critical for the recognition and binding of secretion substrates. This Klebsiella pneumoniae protein is Type II secretion system protein I (pulI).